The sequence spans 173 residues: NADH-ubiquinone oxidoreductase chain 6 (173 aa).

4 helical membrane-spanning segments follow: residues 12–32 (VFWL…VSLV), 47–67 (GSFL…VIFA), 94–114 (VVLA…GECG), and 142–162 (GALM…LVLV).

The protein belongs to the complex I subunit 6 family.

It localises to the mitochondrion membrane. The enzyme catalyses a ubiquinone + NADH + 5 H(+)(in) = a ubiquinol + NAD(+) + 4 H(+)(out). Functionally, core subunit of the mitochondrial membrane respiratory chain NADH dehydrogenase (Complex I) that is believed to belong to the minimal assembly required for catalysis. Complex I functions in the transfer of electrons from NADH to the respiratory chain. The immediate electron acceptor for the enzyme is believed to be ubiquinone. The polypeptide is NADH-ubiquinone oxidoreductase chain 6 (MT-ND6) (Pelomedusa subrufa (African side-necked turtle)).